The sequence spans 200 residues: Phospholipase A2 inhibitor gamma subunit B (200 aa).

The first 19 residues, 1-19 (MKFLLFCCLFGTFLATGMC), serve as a signal peptide directing secretion. Disulfide bonds link C22-C46, C25-C32, C39-C67, C73-C94, C95-C100, C120-C145, C138-C165, and C171-C191. N31 is a glycosylation site (N-linked (GlcNAc...) asparagine).

This sequence belongs to the CNF-like-inhibitor family. As to quaternary structure, heterodimer of subunit A and subunit B. N-glycosylated. As to expression, expressed by the liver. Not expressed in esophagus, stomach, pancreas, spleen, gall bladder, small intestine, rectum, kidney, trachea, lung, testis and body fat.

The protein localises to the secreted. Its function is as follows. Inhibits the enzymatic activity of phospholipase A2 (PA2). The sequence is that of Phospholipase A2 inhibitor gamma subunit B from Elaphe quadrivirgata (Japanese four-lined ratsnake).